The following is a 195-amino-acid chain: Ureidoglycolate lyase (195 aa).

This sequence belongs to the ureidoglycolate lyase family. As to quaternary structure, homodimer.

The catalysed reaction is (S)-ureidoglycolate = urea + glyoxylate. Its pathway is nitrogen metabolism; (S)-allantoin degradation. Functionally, catalyzes the catabolism of the allantoin degradation intermediate (S)-ureidoglycolate, generating urea and glyoxylate. Involved in the utilization of allantoin as secondary nitrogen source when primary sources are limiting. This is Ureidoglycolate lyase (DAL3) from Saccharomyces cerevisiae (strain ATCC 204508 / S288c) (Baker's yeast).